The primary structure comprises 464 residues: Fumarate hydratase class II (464 aa).

Substrate is bound by residues 98–100 (SGT), 129–132 (HPND), 139–141 (SSN), and threonine 187. Histidine 188 functions as the Proton donor/acceptor in the catalytic mechanism. Residue serine 318 is part of the active site. Residues serine 319 and 324–326 (KVN) contribute to the substrate site.

Belongs to the class-II fumarase/aspartase family. Fumarase subfamily. Homotetramer.

The protein resides in the cytoplasm. It carries out the reaction (S)-malate = fumarate + H2O. It participates in carbohydrate metabolism; tricarboxylic acid cycle; (S)-malate from fumarate: step 1/1. In terms of biological role, involved in the TCA cycle. Catalyzes the stereospecific interconversion of fumarate to L-malate. This chain is Fumarate hydratase class II, found in Haemophilus ducreyi (strain 35000HP / ATCC 700724).